Here is a 156-residue protein sequence, read N- to C-terminus: 6,7-dimethyl-8-ribityllumazine synthase (156 aa).

5-amino-6-(D-ribitylamino)uracil is bound by residues Phe-22, 57 to 59, and 81 to 83; these read AYE and TVI. 86-87 contributes to the (2S)-2-hydroxy-3-oxobutyl phosphate binding site; sequence GT. The Proton donor role is filled by His-89. Phe-114 is a binding site for 5-amino-6-(D-ribitylamino)uracil. Arg-128 is a (2S)-2-hydroxy-3-oxobutyl phosphate binding site.

It belongs to the DMRL synthase family. Forms an icosahedral capsid composed of 60 subunits, arranged as a dodecamer of pentamers.

It catalyses the reaction (2S)-2-hydroxy-3-oxobutyl phosphate + 5-amino-6-(D-ribitylamino)uracil = 6,7-dimethyl-8-(1-D-ribityl)lumazine + phosphate + 2 H2O + H(+). Its pathway is cofactor biosynthesis; riboflavin biosynthesis; riboflavin from 2-hydroxy-3-oxobutyl phosphate and 5-amino-6-(D-ribitylamino)uracil: step 1/2. Catalyzes the formation of 6,7-dimethyl-8-ribityllumazine by condensation of 5-amino-6-(D-ribitylamino)uracil with 3,4-dihydroxy-2-butanone 4-phosphate. This is the penultimate step in the biosynthesis of riboflavin. The protein is 6,7-dimethyl-8-ribityllumazine synthase of Yersinia enterocolitica serotype O:8 / biotype 1B (strain NCTC 13174 / 8081).